The chain runs to 118 residues: Large ribosomal subunit protein uL18 (118 aa).

This sequence belongs to the universal ribosomal protein uL18 family. As to quaternary structure, part of the 50S ribosomal subunit; part of the 5S rRNA/L5/L18/L25 subcomplex. Contacts the 5S and 23S rRNAs.

In terms of biological role, this is one of the proteins that bind and probably mediate the attachment of the 5S RNA into the large ribosomal subunit, where it forms part of the central protuberance. This is Large ribosomal subunit protein uL18 from Helicobacter pylori (strain P12).